The following is a 562-amino-acid chain: Arginine--tRNA ligase 1 (562 aa).

The 'HIGH' region motif lies at 122 to 132 (PNIAKPFSMGH).

The protein belongs to the class-I aminoacyl-tRNA synthetase family. Monomer.

The protein localises to the cytoplasm. It catalyses the reaction tRNA(Arg) + L-arginine + ATP = L-arginyl-tRNA(Arg) + AMP + diphosphate. The chain is Arginine--tRNA ligase 1 from Bacillus cereus (strain ZK / E33L).